The following is a 319-amino-acid chain: Acetyl-coenzyme A carboxylase carboxyl transferase subunit alpha (319 aa).

A CoA carboxyltransferase C-terminal domain is found at asparagine 35 to glutamate 296.

It belongs to the AccA family. In terms of assembly, acetyl-CoA carboxylase is a heterohexamer composed of biotin carboxyl carrier protein (AccB), biotin carboxylase (AccC) and two subunits each of ACCase subunit alpha (AccA) and ACCase subunit beta (AccD).

The protein resides in the cytoplasm. It catalyses the reaction N(6)-carboxybiotinyl-L-lysyl-[protein] + acetyl-CoA = N(6)-biotinyl-L-lysyl-[protein] + malonyl-CoA. It functions in the pathway lipid metabolism; malonyl-CoA biosynthesis; malonyl-CoA from acetyl-CoA: step 1/1. Functionally, component of the acetyl coenzyme A carboxylase (ACC) complex. First, biotin carboxylase catalyzes the carboxylation of biotin on its carrier protein (BCCP) and then the CO(2) group is transferred by the carboxyltransferase to acetyl-CoA to form malonyl-CoA. This chain is Acetyl-coenzyme A carboxylase carboxyl transferase subunit alpha, found in Photorhabdus laumondii subsp. laumondii (strain DSM 15139 / CIP 105565 / TT01) (Photorhabdus luminescens subsp. laumondii).